A 360-amino-acid chain; its full sequence is DNA polymerase IV (360 aa).

The region spanning 8–189 (IIHVDMDCFF…LPLEKIPGVG (182 aa)) is the UmuC domain. Positions 12 and 107 each coordinate Mg(2+). Glu-108 is a catalytic residue.

Belongs to the DNA polymerase type-Y family. Monomer. The cofactor is Mg(2+).

The protein resides in the cytoplasm. The enzyme catalyses DNA(n) + a 2'-deoxyribonucleoside 5'-triphosphate = DNA(n+1) + diphosphate. Functionally, poorly processive, error-prone DNA polymerase involved in untargeted mutagenesis. Copies undamaged DNA at stalled replication forks, which arise in vivo from mismatched or misaligned primer ends. These misaligned primers can be extended by PolIV. Exhibits no 3'-5' exonuclease (proofreading) activity. May be involved in translesional synthesis, in conjunction with the beta clamp from PolIII. This is DNA polymerase IV from Vibrio cholerae serotype O1 (strain ATCC 39541 / Classical Ogawa 395 / O395).